The chain runs to 124 residues: Quinol oxidase subunit 4 (124 aa).

The next 3 helical transmembrane spans lie at 16-36 (IVGF…AVYT), 44-64 (LWII…MFMH), and 78-98 (TLFG…IFAA).

Belongs to the cytochrome c oxidase bacterial subunit 4 family.

It localises to the cell membrane. It catalyses the reaction 2 a quinol + O2 = 2 a quinone + 2 H2O. Functionally, catalyzes quinol oxidation with the concomitant reduction of oxygen to water. Major component for energy conversion during vegetative growth. The chain is Quinol oxidase subunit 4 (qoxD) from Bacillus subtilis (strain 168).